The following is a 391-amino-acid chain: Homocysteine-responsive endoplasmic reticulum-resident ubiquitin-like domain member 1 protein (391 aa).

N-acetylmethionine is present on Met-1. The Cytoplasmic portion of the chain corresponds to 1 to 263 (MESETEPEPV…VEEDDEINRD (263 aa)). A Ubiquitin-like domain is found at 10-72 (VTLLVKSPNQ…LLDHQCLRDL (63 aa)). The tract at residues 100-126 (KVAESTEEPAGSNRGQYPEDSSSDGLR) is disordered. The span at 112 to 124 (NRGQYPEDSSSDG) shows a compositional bias: polar residues. Residues 115-200 (QYPEDSSSDG…ASGAFVPPPS (86 aa)) form an interaction with UBQLN1 region. Phosphoserine is present on Ser-135. The chain crosses the membrane as a helical span at residues 264 to 284 (WLDWTYSAATFSVFLSILYFY). The Lumenal portion of the chain corresponds to 285–289 (SSLSR). A helical membrane pass occupies residues 290–310 (FLMVMGATVVMYLHHVGWFPF). Residues 311-391 (RPRPVQNFPN…LPEGPPAIAN (81 aa)) lie on the Cytoplasmic side of the membrane. A disordered region spans residues 318–359 (FPNDGPPPDIVNQDPNNNLQEGTDPETEDPNHVPPDRGVLDG). Basic and acidic residues predominate over residues 346–357 (DPNHVPPDRGVL).

In terms of assembly, interacts with PSEN1 and PSEN2. Interacts with UBXN6. Interacts with UBQLN1, UBQLN2 and UBQLN4. Component of the HRD1 complex, which comprises at least SYNV1/HRD1, FAM8A1, HERPUD1/HERP, OS9, SEL1L and UBE2J1. FAM8A1 binding to SYNV1 may promote recruitment of HERPUD1 to the HRD1 complex.

Its subcellular location is the endoplasmic reticulum membrane. Component of the endoplasmic reticulum quality control (ERQC) system also called ER-associated degradation (ERAD) involved in ubiquitin-dependent degradation of misfolded endoplasmic reticulum proteins. Binds to ubiquilins and this interaction is required for efficient degradation of CD3D via the ERAD pathway. The protein is Homocysteine-responsive endoplasmic reticulum-resident ubiquitin-like domain member 1 protein (HERPUD1) of Pongo abelii (Sumatran orangutan).